Here is a 356-residue protein sequence, read N- to C-terminus: DNA-directed RNA polymerase subunit alpha (356 aa).

Residues 1 to 230 (MNLHRISSEP…DLLKPLLKVE (230 aa)) are alpha N-terminal domain (alpha-NTD). The alpha C-terminal domain (alpha-CTD) stretch occupies residues 267–356 (IDQPLLPADS…IRKSYGHILG (90 aa)).

Belongs to the RNA polymerase alpha chain family. In terms of assembly, in plastids the minimal PEP RNA polymerase catalytic core is composed of four subunits: alpha, beta, beta', and beta''. When a (nuclear-encoded) sigma factor is associated with the core the holoenzyme is formed, which can initiate transcription.

Its subcellular location is the plastid. It localises to the chloroplast. It catalyses the reaction RNA(n) + a ribonucleoside 5'-triphosphate = RNA(n+1) + diphosphate. DNA-dependent RNA polymerase catalyzes the transcription of DNA into RNA using the four ribonucleoside triphosphates as substrates. The chain is DNA-directed RNA polymerase subunit alpha from Zygnema circumcarinatum (Green alga).